The chain runs to 48 residues: MARYRCCRSQSRSRCRRRRRRCYRRRRRCCRRRRRRVCCRRYTRYRRR.

It belongs to the protamine P1 family. In terms of tissue distribution, testis.

It is found in the nucleus. It localises to the chromosome. Its function is as follows. Protamines substitute for histones in the chromatin of sperm during the haploid phase of spermatogenesis. They compact sperm DNA into a highly condensed, stable and inactive complex. This is Sperm protamine P1 (PRM1) from Corynorhinus townsendii (Townsend's big-eared bat).